A 1849-amino-acid polypeptide reads, in one-letter code: Protein TANC1 (1849 aa).

N-acetylmethionine is present on Met-1. 2 disordered regions span residues Met-1–Asp-47 and Met-59–Gly-109. The span at Lys-8–Gly-21 shows a compositional bias: basic and acidic residues. The span at Glu-27 to Glu-46 shows a compositional bias: polar residues. A phosphoserine mark is found at Ser-60, Ser-63, Ser-64, Ser-204, Ser-267, and Ser-455. Disordered regions lie at residues Asp-264–Asn-309 and Val-430–Arg-481. Positions Thr-451–Thr-468 are enriched in low complexity. ANK repeat units follow at residues Glu-886 to Tyr-918, Asn-924 to Gly-953, Asn-957 to His-986, Lys-990 to Pro-1019, Ala-1030 to Ile-1059, Trp-1068 to Arg-1097, Arg-1101 to Pro-1130, Gln-1134 to Ser-1163, Glu-1167 to Gln-1196, Asn-1200 to His-1229, and Ser-1233 to Asn-1262. TPR repeat units lie at residues Leu-1279 to Glu-1312, Val-1326 to Ser-1359, and Glu-1361 to Asn-1393. Residues Leu-1410–Pro-1421 show a composition bias toward low complexity. Disordered stretches follow at residues Leu-1410–Ser-1503, Asn-1527–Gly-1605, Gln-1635–Thr-1711, and Pro-1812–Val-1849. Phosphoserine occurs at positions 1429 and 1456. The segment covering Glu-1447–Ser-1456 has biased composition (acidic residues). Polar residues-rich tracts occupy residues Asn-1527–Val-1546 and Pro-1593–Glu-1603. A compositionally biased stretch (low complexity) spans Ser-1649–Ser-1679. Ser-1658, Ser-1666, and Ser-1667 each carry phosphoserine.

This sequence belongs to the TANC family. In terms of assembly, interacts probably directly with DLG1, DLG4, HOMER1. Interacts with DLGAP1, INA, CAMK2A, GRIN2B and GRIA1. Interacts with TNIK and MINK1. In terms of processing, phosphorylated; by MINK1 and TNIK upon stimulation by RAP2A. As to expression, expressed in heart, lung, liver and kidney. Expressed in brain (at protein level).

Its subcellular location is the postsynaptic density. Functionally, may be a scaffold component in the postsynaptic density. In Rattus norvegicus (Rat), this protein is Protein TANC1 (Tanc1).